Consider the following 887-residue polypeptide: Chaperone protein ClpB 2 (887 aa).

The Clp R domain maps to 6–147 (PTKFTDKAWE…AATVKAIRGA (142 aa)). Repeat regions lie at residues 9–73 (FTDK…ARQQ) and 84–147 (CGRS…IRGA). The interval 160–342 (AALEKYGRDL…RRFQQVYIGQ (183 aa)) is NBD1. An ATP-binding site is contributed by 207-214 (GEPGVGKT). The interval 343–559 (PSVEDTISIL…IAEIVAKWTG (217 aa)) is linker. Residues 393–535 (IDLVDEAAAK…TEAQLLELQA (143 aa)) adopt a coiled-coil conformation. The segment at 569-780 (ERQKLLQLEQ…RIDDVILFHG (212 aa)) is NBD2. 619–626 (GPTGVGKT) contacts ATP. The C-terminal stretch occupies residues 781–887 (LGRTELAQIA…TGDRDTVSAS (107 aa)).

Belongs to the ClpA/ClpB family. Homohexamer. The oligomerization is ATP-dependent.

The protein localises to the cytoplasm. Functionally, part of a stress-induced multi-chaperone system, it is involved in the recovery of the cell from heat-induced damage, in cooperation with DnaK, DnaJ and GrpE. Acts before DnaK, in the processing of protein aggregates. Protein binding stimulates the ATPase activity; ATP hydrolysis unfolds the denatured protein aggregates, which probably helps expose new hydrophobic binding sites on the surface of ClpB-bound aggregates, contributing to the solubilization and refolding of denatured protein aggregates by DnaK. The sequence is that of Chaperone protein ClpB 2 (clpB2) from Thermosynechococcus vestitus (strain NIES-2133 / IAM M-273 / BP-1).